The chain runs to 341 residues: L-threonine 3-dehydrogenase (341 aa).

Cys-38 serves as a coordination point for Zn(2+). Active-site charge relay system residues include Thr-40 and His-43. Residues His-63, Glu-64, Cys-93, Cys-96, Cys-99, and Cys-107 each coordinate Zn(2+). Residues Ile-175, Asp-195, Arg-200, 262 to 264, and 286 to 287 contribute to the NAD(+) site; these read LGI and IY.

It belongs to the zinc-containing alcohol dehydrogenase family. As to quaternary structure, homotetramer. The cofactor is Zn(2+).

The protein localises to the cytoplasm. It catalyses the reaction L-threonine + NAD(+) = (2S)-2-amino-3-oxobutanoate + NADH + H(+). It participates in amino-acid degradation; L-threonine degradation via oxydo-reductase pathway; glycine from L-threonine: step 1/2. Catalyzes the NAD(+)-dependent oxidation of L-threonine to 2-amino-3-ketobutyrate. The protein is L-threonine 3-dehydrogenase of Escherichia fergusonii (strain ATCC 35469 / DSM 13698 / CCUG 18766 / IAM 14443 / JCM 21226 / LMG 7866 / NBRC 102419 / NCTC 12128 / CDC 0568-73).